The chain runs to 188 residues: Peptidyl-tRNA hydrolase (188 aa).

Y14 lines the tRNA pocket. Catalysis depends on H19, which acts as the Proton acceptor. TRNA-binding residues include Y64, N66, and N113.

It belongs to the PTH family. Monomer.

The protein resides in the cytoplasm. The enzyme catalyses an N-acyl-L-alpha-aminoacyl-tRNA + H2O = an N-acyl-L-amino acid + a tRNA + H(+). Its function is as follows. Hydrolyzes ribosome-free peptidyl-tRNAs (with 1 or more amino acids incorporated), which drop off the ribosome during protein synthesis, or as a result of ribosome stalling. Functionally, catalyzes the release of premature peptidyl moieties from peptidyl-tRNA molecules trapped in stalled 50S ribosomal subunits, and thus maintains levels of free tRNAs and 50S ribosomes. The sequence is that of Peptidyl-tRNA hydrolase from Chloroflexus aurantiacus (strain ATCC 29364 / DSM 637 / Y-400-fl).